The chain runs to 474 residues: Tumor necrosis factor receptor superfamily member 1B (474 aa).

Residues 1–22 (MAPAALWVALVVELQLWATGHT) form the signal peptide. Over 23–258 (VPAKVVLTPY…PIIEPSITGG (236 aa)) the chain is Extracellular. An O-linked (GalNAc...) threonine glycan is attached at Thr30. TNFR-Cys repeat units lie at residues 39 to 77 (QCQISQEYYDKKAQMCCAKCPPGQYAKHFCNKTSDTVCA), 78 to 119 (DCAA…NRVC), 120 to 164 (ACNA…VICS), and 165 to 203 (ACAPGTFSDTTSSTDVCRPHRICSILAIPGNASTDAVCA). Disulfide bonds link Cys40-Cys54, Cys55-Cys68, Cys58-Cys76, Cys79-Cys94, Cys97-Cys111, Cys101-Cys119, Cys121-Cys127, Cys136-Cys145, Cys139-Cys163, and Cys166-Cys181. Residue Asn69 is glycosylated (N-linked (GlcNAc...) asparagine). N-linked (GlcNAc...) asparagine glycosylation occurs at Asn110. Asn195 is a glycosylation site (N-linked (GlcNAc...) asparagine). Residues Thr208 and Thr224 are each glycosylated (O-linked (GalNAc...) threonine). The span at 220-239 (QPEPTRSQPMDQEPGPSQTP) shows a compositional bias: polar residues. A disordered region spans residues 220 to 241 (QPEPTRSQPMDQEPGPSQTPHI). Residues 259–288 (ISLPIGLIVGLTTLGLLMLGLANCFILVQR) form a helical membrane-spanning segment. Over 289–474 (KKKPSCLQRE…WYDQIAVKVP (186 aa)) the chain is Cytoplasmic. 2 disordered regions span residues 321-378 (LTTA…GSHG) and 397-464 (SQCS…NQPG). Composition is skewed to low complexity over residues 324-338 (APSSSSSSLESSASA) and 366-378 (GSRSSDSSHGSHG). Residue Ser331 is modified to Phosphoserine. Positions 429–442 (ECPSQSQWETTETL) are enriched in polar residues.

As to quaternary structure, binds to TRAF2. Interacts with BMX. Interacts (activated form) with XPNPEP3.

The protein resides in the membrane. In terms of biological role, receptor with high affinity for TNFSF2/TNF-alpha and approximately 5-fold lower affinity for homotrimeric TNFSF1/lymphotoxin-alpha. The TRAF1/TRAF2 complex recruits the apoptotic suppressors BIRC2 and BIRC3 to TNFRSF1B/TNFR2. The chain is Tumor necrosis factor receptor superfamily member 1B (Tnfrsf1b) from Rattus norvegicus (Rat).